Reading from the N-terminus, the 164-residue chain is V-type proton ATPase 16 kDa proteolipid subunit (164 aa).

Residues 1–10 are Lumenal-facing; that stretch reads MSDLCPPTAP. Residues 11–31 form a helical membrane-spanning segment; it reads FFGFMGAAVALIFANLGAAYG. Residues 32 to 53 are Cytoplasmic-facing; the sequence is TAKSGVGVSSMGVMKPDLVMKS. Residues 54–74 form a helical membrane-spanning segment; the sequence is IIPVVMAGVLGIYGLIIAVII. Topologically, residues 75-96 are lumenal; it reads GNGVKGPEGGKPQYSSFTGFAH. A helical membrane pass occupies residues 97–118; the sequence is LAAGLACGLSGMAAGIAIGIVG. Topologically, residues 119–130 are cytoplasmic; it reads DAGVRASAQQAK. Residues 131–155 form a helical membrane-spanning segment; it reads LYVGMVLILIFAEALGLYGLIVGLI. The Lumenal segment spans residues 156–164; the sequence is LTSKEAPCS.

Belongs to the V-ATPase proteolipid subunit family. As to quaternary structure, V-ATPase is a heteromultimeric enzyme composed of a peripheral catalytic V1 complex (main components: subunits A, B, C, D, E, and F) attached to an integral membrane V0 proton pore complex (main component: the proteolipid protein; which is present as a hexamer that forms the proton-conducting pore).

Its subcellular location is the vacuole membrane. Functionally, proton-conducting pore forming subunit of the membrane integral V0 complex of vacuolar ATPase. V-ATPase is responsible for acidifying a variety of intracellular compartments in eukaryotic cells. The chain is V-type proton ATPase 16 kDa proteolipid subunit (VAP) from Chrysotila carterae (Marine alga).